The following is a 360-amino-acid chain: S-adenosylmethionine:tRNA ribosyltransferase-isomerase (360 aa).

The protein belongs to the QueA family. As to quaternary structure, monomer.

The protein resides in the cytoplasm. The catalysed reaction is 7-aminomethyl-7-carbaguanosine(34) in tRNA + S-adenosyl-L-methionine = epoxyqueuosine(34) in tRNA + adenine + L-methionine + 2 H(+). The protein operates within tRNA modification; tRNA-queuosine biosynthesis. Its function is as follows. Transfers and isomerizes the ribose moiety from AdoMet to the 7-aminomethyl group of 7-deazaguanine (preQ1-tRNA) to give epoxyqueuosine (oQ-tRNA). In Burkholderia pseudomallei (strain 1106a), this protein is S-adenosylmethionine:tRNA ribosyltransferase-isomerase.